A 175-amino-acid polypeptide reads, in one-letter code: MGTVNVVRVVSLHKLSWYEKFYFYSIGKGLWITLKHFIKAAILRRTVTIEYPEKKRKYSTRFRGMHTMKRDEQGRERCTSCFCCMWICPADAIYIEAGEVVPEIQHLHPEDKYAKKFEIDLLRCIFCGMCEEACPKGAIYLDGPGEMATDSREDLILTKERMMQIVGGPIIGERQ.

2 consecutive 4Fe-4S ferredoxin-type domains span residues lysine 69–glycine 98 and lysine 115–proline 144. The [4Fe-4S] cluster site is built by cysteine 78, cysteine 81, cysteine 84, cysteine 88, cysteine 124, cysteine 127, cysteine 130, and cysteine 134.

The protein belongs to the complex I 23 kDa subunit family. NDH-1 is composed of 14 different subunits. Subunits NuoA, H, J, K, L, M, N constitute the membrane sector of the complex. Requires [4Fe-4S] cluster as cofactor.

The protein resides in the cell inner membrane. The catalysed reaction is a quinone + NADH + 5 H(+)(in) = a quinol + NAD(+) + 4 H(+)(out). NDH-1 shuttles electrons from NADH, via FMN and iron-sulfur (Fe-S) centers, to quinones in the respiratory chain. The immediate electron acceptor for the enzyme in this species is believed to be ubiquinone. Couples the redox reaction to proton translocation (for every two electrons transferred, four hydrogen ions are translocated across the cytoplasmic membrane), and thus conserves the redox energy in a proton gradient. This chain is NADH-quinone oxidoreductase subunit I, found in Leptospira borgpetersenii serovar Hardjo-bovis (strain JB197).